We begin with the raw amino-acid sequence, 92 residues long: CRISPR-associated endoribonuclease Cas2 3 (92 aa).

Aspartate 9 contacts Mg(2+).

Belongs to the CRISPR-associated endoribonuclease Cas2 protein family. As to quaternary structure, homodimer, forms a heterotetramer with a Cas1 homodimer. It depends on Mg(2+) as a cofactor.

Functionally, CRISPR (clustered regularly interspaced short palindromic repeat), is an adaptive immune system that provides protection against mobile genetic elements (viruses, transposable elements and conjugative plasmids). CRISPR clusters contain sequences complementary to antecedent mobile elements and target invading nucleic acids. CRISPR clusters are transcribed and processed into CRISPR RNA (crRNA). Functions as a ssRNA-specific endoribonuclease. Involved in the integration of spacer DNA into the CRISPR cassette. The protein is CRISPR-associated endoribonuclease Cas2 3 of Synechocystis sp. (strain ATCC 27184 / PCC 6803 / Kazusa).